The chain runs to 170 residues: Adenine phosphoribosyltransferase (170 aa).

The protein belongs to the purine/pyrimidine phosphoribosyltransferase family. In terms of assembly, homodimer.

It is found in the cytoplasm. The enzyme catalyses AMP + diphosphate = 5-phospho-alpha-D-ribose 1-diphosphate + adenine. It functions in the pathway purine metabolism; AMP biosynthesis via salvage pathway; AMP from adenine: step 1/1. Its function is as follows. Catalyzes a salvage reaction resulting in the formation of AMP, that is energically less costly than de novo synthesis. This Geobacillus thermodenitrificans (strain NG80-2) protein is Adenine phosphoribosyltransferase.